A 318-amino-acid chain; its full sequence is Ribonuclease Z (318 aa).

His62, His64, Asp66, His67, His139, Asp210, and His268 together coordinate Zn(2+). Residue Asp66 is the Proton acceptor of the active site.

Belongs to the RNase Z family. In terms of assembly, homodimer. The cofactor is Zn(2+).

It catalyses the reaction Endonucleolytic cleavage of RNA, removing extra 3' nucleotides from tRNA precursor, generating 3' termini of tRNAs. A 3'-hydroxy group is left at the tRNA terminus and a 5'-phosphoryl group is left at the trailer molecule.. Its function is as follows. Zinc phosphodiesterase, which displays some tRNA 3'-processing endonuclease activity. Probably involved in tRNA maturation, by removing a 3'-trailer from precursor tRNA. This chain is Ribonuclease Z, found in Gloeothece citriformis (strain PCC 7424) (Cyanothece sp. (strain PCC 7424)).